The sequence spans 33 residues: Ice-structuring protein GS-5 (33 aa).

Blocked amino end (Met) is present on Met-1.

Belongs to the type-I AFP family.

In terms of biological role, antifreeze proteins lower the blood freezing point. The protein is Ice-structuring protein GS-5 of Myoxocephalus aenaeus (Grubby sculpin).